Reading from the N-terminus, the 308-residue chain is Aspartate carbamoyltransferase catalytic subunit (308 aa).

Residues Arg-59 and Thr-60 each contribute to the carbamoyl phosphate site. Lys-87 contacts L-aspartate. The carbamoyl phosphate site is built by Arg-109, His-139, and Gln-142. L-aspartate is bound by residues Arg-172 and Arg-224. Residues Ala-265 and Pro-266 each contribute to the carbamoyl phosphate site.

The protein belongs to the aspartate/ornithine carbamoyltransferase superfamily. ATCase family. In terms of assembly, heterododecamer (2C3:3R2) of six catalytic PyrB chains organized as two trimers (C3), and six regulatory PyrI chains organized as three dimers (R2).

It catalyses the reaction carbamoyl phosphate + L-aspartate = N-carbamoyl-L-aspartate + phosphate + H(+). Its pathway is pyrimidine metabolism; UMP biosynthesis via de novo pathway; (S)-dihydroorotate from bicarbonate: step 2/3. Functionally, catalyzes the condensation of carbamoyl phosphate and aspartate to form carbamoyl aspartate and inorganic phosphate, the committed step in the de novo pyrimidine nucleotide biosynthesis pathway. This Streptococcus mutans serotype c (strain ATCC 700610 / UA159) protein is Aspartate carbamoyltransferase catalytic subunit.